A 364-amino-acid polypeptide reads, in one-letter code: UDP-N-acetylenolpyruvoylglucosamine reductase (364 aa).

One can recognise an FAD-binding PCMH-type domain in the interval 30–196 (LGGPATRLIT…LRVRFELEDA (167 aa)). Arginine 173 is an active-site residue. Catalysis depends on serine 252, which acts as the Proton donor. Residue glutamate 356 is part of the active site.

It belongs to the MurB family. FAD is required as a cofactor.

It localises to the cytoplasm. It carries out the reaction UDP-N-acetyl-alpha-D-muramate + NADP(+) = UDP-N-acetyl-3-O-(1-carboxyvinyl)-alpha-D-glucosamine + NADPH + H(+). It functions in the pathway cell wall biogenesis; peptidoglycan biosynthesis. Its function is as follows. Cell wall formation. In Streptomyces avermitilis (strain ATCC 31267 / DSM 46492 / JCM 5070 / NBRC 14893 / NCIMB 12804 / NRRL 8165 / MA-4680), this protein is UDP-N-acetylenolpyruvoylglucosamine reductase.